Here is a 172-residue protein sequence, read N- to C-terminus: Co-chaperone protein HscB homolog (172 aa).

The J domain occupies 2-69; that stretch reads NHFELFNLPV…DSRAAYLLAL (68 aa).

It belongs to the HscB family. In terms of assembly, interacts with HscA and stimulates its ATPase activity.

Its function is as follows. Co-chaperone involved in the maturation of iron-sulfur cluster-containing proteins. Seems to help targeting proteins to be folded toward HscA. The chain is Co-chaperone protein HscB homolog from Acinetobacter baumannii (strain SDF).